Here is a 452-residue protein sequence, read N- to C-terminus: Cobyrinate a,c-diamide synthase (452 aa).

The 194-residue stretch at 248 to 441 folds into the GATase cobBQ-type domain; the sequence is RVAYALDAAF…LHIHFYQNPA (194 aa). The Nucleophile role is filled by C330.

It belongs to the CobB/CbiA family. Requires Mg(2+) as cofactor.

It carries out the reaction cob(II)yrinate + 2 L-glutamine + 2 ATP + 2 H2O = cob(II)yrinate a,c diamide + 2 L-glutamate + 2 ADP + 2 phosphate + 2 H(+). It participates in cofactor biosynthesis; adenosylcobalamin biosynthesis; cob(II)yrinate a,c-diamide from sirohydrochlorin (anaerobic route): step 10/10. Its function is as follows. Catalyzes the ATP-dependent amidation of the two carboxylate groups at positions a and c of cobyrinate, using either L-glutamine or ammonia as the nitrogen source. The protein is Cobyrinate a,c-diamide synthase of Listeria innocua serovar 6a (strain ATCC BAA-680 / CLIP 11262).